The primary structure comprises 116 residues: Large ribosomal subunit protein uL22 (116 aa).

This sequence belongs to the universal ribosomal protein uL22 family. Part of the 50S ribosomal subunit.

In terms of biological role, this protein binds specifically to 23S rRNA; its binding is stimulated by other ribosomal proteins, e.g. L4, L17, and L20. It is important during the early stages of 50S assembly. It makes multiple contacts with different domains of the 23S rRNA in the assembled 50S subunit and ribosome. Functionally, the globular domain of the protein is located near the polypeptide exit tunnel on the outside of the subunit, while an extended beta-hairpin is found that lines the wall of the exit tunnel in the center of the 70S ribosome. The polypeptide is Large ribosomal subunit protein uL22 (Gloeobacter violaceus (strain ATCC 29082 / PCC 7421)).